The sequence spans 263 residues: 3'-5' ssDNA/RNA exonuclease TatD (263 aa).

Residues E92, H128, and H153 each coordinate a divalent metal cation.

The protein belongs to the metallo-dependent hydrolases superfamily. TatD-type hydrolase family. TatD subfamily. Monomer. The cofactor is Mg(2+).

Its subcellular location is the cytoplasm. Its function is as follows. 3'-5' exonuclease that prefers single-stranded DNA and RNA. May play a role in the H(2)O(2)-induced DNA damage repair. The chain is 3'-5' ssDNA/RNA exonuclease TatD from Rahnella sp. (strain Y9602).